The sequence spans 564 residues: uncharacterized protein (564 aa).

The next 8 helical transmembrane spans lie at 12–32, 97–119, 139–161, 188–208, 213–233, 277–297, 306–326, and 348–368; these read TYYL…LFIL, MTAY…YVLL, AFAL…LALW, FVLG…YDAI, WNLM…FVEY, MTVH…ALLF, NVYL…AFWF, and FHFL…YLIW.

The protein localises to the cell membrane. This is an uncharacterized protein from Bacillus subtilis (strain 168).